The chain runs to 827 residues: Multiphosphoryl transfer protein (827 aa).

In terms of domain architecture, PTS EIIA type-2 spans 2–142 (IPLTSELVAI…AVIVARLTGA (141 aa)). His-62 functions as the Tele-phosphohistidine intermediate; for EIIA activity in the catalytic mechanism. His-62 is subject to Phosphohistidine; by HPr. The 89-residue stretch at 157 to 245 (AQGIDVVVTG…AFEAGLEDEE (89 aa)) folds into the HPr domain. Catalysis depends on His-171, which acts as the Pros-phosphohistidine intermediate; for HPr activity. His-171 bears the Phosphohistidine; by EI mark. The tract at residues 270–827 (EGRTLVGISS…TTAAEVRGLK (558 aa)) is PTS EI. His-457 serves as the catalytic Tele-phosphohistidine intermediate; for PTS EI activity. At His-457 the chain carries Phosphohistidine; by autocatalysis. Residues Arg-564 and Arg-600 each contribute to the phosphoenolpyruvate site. 2 residues coordinate Mg(2+): Glu-693 and Asp-717. Phosphoenolpyruvate contacts are provided by residues 716–717 (ND) and Arg-727. The active-site Proton donor is the Cys-764.

Belongs to the PEP-utilizing enzyme family. Mg(2+) is required as a cofactor.

The protein resides in the cytoplasm. It catalyses the reaction L-histidyl-[protein] + phosphoenolpyruvate = N(pros)-phospho-L-histidyl-[protein] + pyruvate. Functionally, the phosphoenolpyruvate-dependent sugar phosphotransferase system (sugar PTS), a major carbohydrate active transport system, catalyzes the phosphorylation of incoming sugar substrates concomitantly with their translocation across the cell membrane. The enzyme II FruAB PTS system is involved in fructose transport. This Rhodobacter capsulatus (Rhodopseudomonas capsulata) protein is Multiphosphoryl transfer protein.